Here is an 83-residue protein sequence, read N- to C-terminus: Small proline-rich protein 2A3 (83 aa).

Tandem repeats lie at residues 21–29, 30–38, 39–47, 48–56, and 57–65. The 5 X 9 AA approximate tandem repeats stretch occupies residues 21-65; that stretch reads PKCPEPCPPQVWPGPCRPVMCFEPCLPSVWPGPCRPVVCYEQCPP.

Belongs to the cornifin (SPRR) family. In terms of processing, forms five pairs of intrachain disulfide bonds.

It is found in the secreted. It localises to the extracellular space. The protein localises to the cytoplasmic vesicle. The protein resides in the secretory vesicle. Its function is as follows. Gut bactericidal protein that selectively kills Gram-positive bacteria by binding to negatively charged lipids on bacterial membranes, leading to bacterial membrane permeabilization and disruption. Specifically binds lipids bearing negatively charged headgroups, such as phosphatidic acid, phosphatidylserine (PS), cardiolipin (CL), and phosphatidylinositol phosphates, but not to zwitterionic or neutral lipids. Induced by type-2 cytokines in response to helminth infection and is required to protect against helminth-induced bacterial invasion of intestinal tissue. May also be involved in the development of the cornified envelope of squamous epithelia; however, additional evidences are required to confirm this result in vivo. The chain is Small proline-rich protein 2A3 from Mus musculus (Mouse).